The primary structure comprises 401 residues: Imidazolonepropionase (401 aa).

Fe(3+) contacts are provided by histidine 66 and histidine 68. 2 residues coordinate Zn(2+): histidine 66 and histidine 68. Residues arginine 75, tyrosine 138, and histidine 171 each coordinate 4-imidazolone-5-propanoate. Tyrosine 138 lines the N-formimidoyl-L-glutamate pocket. Residue histidine 236 coordinates Fe(3+). Zn(2+) is bound at residue histidine 236. Glutamine 239 is a 4-imidazolone-5-propanoate binding site. Aspartate 311 is a Fe(3+) binding site. Position 311 (aspartate 311) interacts with Zn(2+). The N-formimidoyl-L-glutamate site is built by asparagine 313 and glycine 315. Threonine 316 lines the 4-imidazolone-5-propanoate pocket.

The protein belongs to the metallo-dependent hydrolases superfamily. HutI family. Zn(2+) is required as a cofactor. Fe(3+) serves as cofactor.

It is found in the cytoplasm. The enzyme catalyses 4-imidazolone-5-propanoate + H2O = N-formimidoyl-L-glutamate. The protein operates within amino-acid degradation; L-histidine degradation into L-glutamate; N-formimidoyl-L-glutamate from L-histidine: step 3/3. Functionally, catalyzes the hydrolytic cleavage of the carbon-nitrogen bond in imidazolone-5-propanoate to yield N-formimidoyl-L-glutamate. It is the third step in the universal histidine degradation pathway. The polypeptide is Imidazolonepropionase (Acinetobacter baumannii (strain ATCC 17978 / DSM 105126 / CIP 53.77 / LMG 1025 / NCDC KC755 / 5377)).